A 109-amino-acid polypeptide reads, in one-letter code: Fluoride-specific ion channel FluC (109 aa).

The next 3 membrane-spanning stretches (helical) occupy residues 21 to 41 (LTLN…GFFV), 52 to 72 (ILFS…YFLY), and 84 to 104 (IIFF…GFWI).

The protein belongs to the fluoride channel Fluc/FEX (TC 1.A.43) family.

The protein resides in the cell inner membrane. The enzyme catalyses fluoride(in) = fluoride(out). Its function is as follows. Fluoride-specific ion channel. Important for reducing fluoride concentration in the cell, thus reducing its toxicity. This is Fluoride-specific ion channel FluC from Prochlorococcus marinus (strain MIT 9301).